Reading from the N-terminus, the 282-residue chain is Putative 4-diphosphocytidyl-2-C-methyl-D-erythritol kinase (282 aa).

The active site involves Lys-10. Position 94-104 (94-104) interacts with ATP; the sequence is PICAGLGGGSS. The active site involves Asp-136.

The protein belongs to the GHMP kinase family. IspE subfamily.

It carries out the reaction 4-CDP-2-C-methyl-D-erythritol + ATP = 4-CDP-2-C-methyl-D-erythritol 2-phosphate + ADP + H(+). Its function is as follows. Catalyzes the phosphorylation of the position 2 hydroxy group of 4-diphosphocytidyl-2C-methyl-D-erythritol. The polypeptide is Putative 4-diphosphocytidyl-2-C-methyl-D-erythritol kinase (ipk) (Streptococcus mutans serotype c (strain ATCC 700610 / UA159)).